The following is a 352-amino-acid chain: S-adenosylmethionine:tRNA ribosyltransferase-isomerase (352 aa).

It belongs to the QueA family. Monomer.

Its subcellular location is the cytoplasm. It carries out the reaction 7-aminomethyl-7-carbaguanosine(34) in tRNA + S-adenosyl-L-methionine = epoxyqueuosine(34) in tRNA + adenine + L-methionine + 2 H(+). The protein operates within tRNA modification; tRNA-queuosine biosynthesis. Functionally, transfers and isomerizes the ribose moiety from AdoMet to the 7-aminomethyl group of 7-deazaguanine (preQ1-tRNA) to give epoxyqueuosine (oQ-tRNA). The polypeptide is S-adenosylmethionine:tRNA ribosyltransferase-isomerase (Vibrio cholerae serotype O1 (strain ATCC 39315 / El Tor Inaba N16961)).